The following is a 647-amino-acid chain: DNA topoisomerase 4 subunit B (647 aa).

ATP contacts are provided by residues Tyr11, Asn51, Asp78, 118–124, and Lys344; that span reads GLHGVGS. A compositionally biased stretch (basic and acidic residues) spans 391–401; sequence AARKARDESRN. Residues 391–421 are disordered; it reads AARKARDESRNGKKNKKDKGLLSGKLTPAQS. In terms of domain architecture, Toprim spans 427-541; the sequence is NELYLVEGDS…AGHVYIALPP (115 aa). Mg(2+)-binding residues include Glu433, Asp506, and Asp508.

The protein belongs to the type II topoisomerase family. ParE type 2 subfamily. Heterotetramer composed of ParC and ParE. The cofactor is Mg(2+). It depends on Mn(2+) as a cofactor. Ca(2+) is required as a cofactor.

The enzyme catalyses ATP-dependent breakage, passage and rejoining of double-stranded DNA.. Inhibited by quinolones, such as levofloxacin. Its function is as follows. Topoisomerase IV is essential for chromosome segregation. It relaxes supercoiled DNA. Performs the decatenation events required during the replication of a circular DNA molecule. This is DNA topoisomerase 4 subunit B from Streptococcus pneumoniae serotype 4 (strain ATCC BAA-334 / TIGR4).